Consider the following 513-residue polypeptide: Calcium-dependent protein kinase 24 (513 aa).

A disordered region spans residues 1–33; the sequence is MQPDPSGSGGDGNANAKAKLAPPPVTAAGGRPV. The 259-residue stretch at 47–305 folds into the Protein kinase domain; the sequence is YRIGKKLGQG…AHEVLCHPWI (259 aa). Residues 53–61 and lysine 76 each bind ATP; that span reads LGQGQFGTT. The active-site Proton acceptor is the aspartate 171. The tract at residues 311–341 is autoinhibitory domain; it reads APDKPIDSAVLSRLKHFSAMNKLKKMALRVI. 4 consecutive EF-hand domains span residues 348–383, 384–419, 420–455, and 458–489; these read EEIG…VGSE, LTEH…MNKL, EREE…FGLD, and HLED…GNAG. Positions 361, 363, 365, 367, 372, 397, 399, 401, 403, 408, 433, 435, 437, 444, 467, 469, 471, 473, and 478 each coordinate Ca(2+).

It belongs to the protein kinase superfamily. Ser/Thr protein kinase family. CDPK subfamily. Expressed in roots.

The protein localises to the cytoplasm. The enzyme catalyses L-seryl-[protein] + ATP = O-phospho-L-seryl-[protein] + ADP + H(+). It catalyses the reaction L-threonyl-[protein] + ATP = O-phospho-L-threonyl-[protein] + ADP + H(+). Activated by calcium. Autophosphorylation may play an important role in the regulation of the kinase activity. Functionally, may play a role in signal transduction pathways that involve calcium as a second messenger. Possesses calcium-dependent protein kinase activity in vitro. The protein is Calcium-dependent protein kinase 24 of Oryza sativa subsp. japonica (Rice).